The chain runs to 323 residues: tRNA U34 carboxymethyltransferase (323 aa).

Carboxy-S-adenosyl-L-methionine is bound by residues Lys-91, Trp-105, Lys-110, Gly-130, 152–154, 181–182, Met-196, Tyr-200, and Arg-315; these read DPT and IE.

It belongs to the class I-like SAM-binding methyltransferase superfamily. CmoB family. In terms of assembly, homotetramer.

The enzyme catalyses carboxy-S-adenosyl-L-methionine + 5-hydroxyuridine(34) in tRNA = 5-carboxymethoxyuridine(34) in tRNA + S-adenosyl-L-homocysteine + H(+). Its function is as follows. Catalyzes carboxymethyl transfer from carboxy-S-adenosyl-L-methionine (Cx-SAM) to 5-hydroxyuridine (ho5U) to form 5-carboxymethoxyuridine (cmo5U) at position 34 in tRNAs. The sequence is that of tRNA U34 carboxymethyltransferase from Escherichia coli O7:K1 (strain IAI39 / ExPEC).